The sequence spans 338 residues: Sporulation-specific protein 4 (338 aa).

Residues 14-37 are disordered; sequence QEENKNFLHKNTNEPNEMEQSQTQ. The segment covering 22–37 has biased composition (polar residues); that stretch reads HKNTNEPNEMEQSQTQ.

Its function is as follows. Not essential for sporulation. Might be a component of the cell wall. The chain is Sporulation-specific protein 4 (SPS4) from Saccharomyces cerevisiae (strain ATCC 204508 / S288c) (Baker's yeast).